The following is a 280-amino-acid chain: Thiamine-phosphate synthase (280 aa).

Residues 1-64 form a disordered region; that stretch reads MGWSGSPLTL…ATGRGGLRMT (64 aa). Over residues 42–55 the composition is skewed to basic and acidic residues; that stretch reads GRGELRSRERRGEA. 4-amino-2-methyl-5-(diphosphooxymethyl)pyrimidine contacts are provided by residues 104–108 and Asn-141; that span reads QLRCK. Mg(2+) is bound by residues Asp-142 and Asp-161. Ser-179 serves as a coordination point for 4-amino-2-methyl-5-(diphosphooxymethyl)pyrimidine. 205–207 is a binding site for 2-[(2R,5Z)-2-carboxy-4-methylthiazol-5(2H)-ylidene]ethyl phosphate; the sequence is TPT. A 4-amino-2-methyl-5-(diphosphooxymethyl)pyrimidine-binding site is contributed by Lys-208. Gly-236 provides a ligand contact to 2-[(2R,5Z)-2-carboxy-4-methylthiazol-5(2H)-ylidene]ethyl phosphate.

The protein belongs to the thiamine-phosphate synthase family. Requires Mg(2+) as cofactor.

It catalyses the reaction 2-[(2R,5Z)-2-carboxy-4-methylthiazol-5(2H)-ylidene]ethyl phosphate + 4-amino-2-methyl-5-(diphosphooxymethyl)pyrimidine + 2 H(+) = thiamine phosphate + CO2 + diphosphate. The enzyme catalyses 2-(2-carboxy-4-methylthiazol-5-yl)ethyl phosphate + 4-amino-2-methyl-5-(diphosphooxymethyl)pyrimidine + 2 H(+) = thiamine phosphate + CO2 + diphosphate. The catalysed reaction is 4-methyl-5-(2-phosphooxyethyl)-thiazole + 4-amino-2-methyl-5-(diphosphooxymethyl)pyrimidine + H(+) = thiamine phosphate + diphosphate. The protein operates within cofactor biosynthesis; thiamine diphosphate biosynthesis; thiamine phosphate from 4-amino-2-methyl-5-diphosphomethylpyrimidine and 4-methyl-5-(2-phosphoethyl)-thiazole: step 1/1. Condenses 4-methyl-5-(beta-hydroxyethyl)thiazole monophosphate (THZ-P) and 2-methyl-4-amino-5-hydroxymethyl pyrimidine pyrophosphate (HMP-PP) to form thiamine monophosphate (TMP). The protein is Thiamine-phosphate synthase of Deinococcus radiodurans (strain ATCC 13939 / DSM 20539 / JCM 16871 / CCUG 27074 / LMG 4051 / NBRC 15346 / NCIMB 9279 / VKM B-1422 / R1).